The following is a 764-amino-acid chain: 5-methyltetrahydropteroyltriglutamate--homocysteine methyltransferase (764 aa).

5-methyltetrahydropteroyltri-L-glutamate-binding positions include 16–19 (RELK) and K117. L-homocysteine-binding positions include 442–444 (IGS) and E495. Residues 442 to 444 (IGS) and E495 each bind L-methionine. Residues 526-527 (RC) and W572 each bind 5-methyltetrahydropteroyltri-L-glutamate. Residue D610 participates in L-homocysteine binding. D610 contacts L-methionine. E616 provides a ligand contact to 5-methyltetrahydropteroyltri-L-glutamate. H652, C654, and E676 together coordinate Zn(2+). Residue H705 is the Proton donor of the active site. A Zn(2+)-binding site is contributed by C737.

It belongs to the vitamin-B12 independent methionine synthase family. It depends on Zn(2+) as a cofactor.

It carries out the reaction 5-methyltetrahydropteroyltri-L-glutamate + L-homocysteine = tetrahydropteroyltri-L-glutamate + L-methionine. The protein operates within amino-acid biosynthesis; L-methionine biosynthesis via de novo pathway; L-methionine from L-homocysteine (MetE route): step 1/1. Functionally, catalyzes the transfer of a methyl group from 5-methyltetrahydrofolate to homocysteine resulting in methionine formation. The protein is 5-methyltetrahydropteroyltriglutamate--homocysteine methyltransferase of Bordetella pertussis (strain Tohama I / ATCC BAA-589 / NCTC 13251).